The sequence spans 372 residues: Proton-coupled zinc antiporter SLC30A2 (372 aa).

Residues 1–140 (MEAKEKQHLL…TMNFGWQRAE (140 aa)) lie on the Cytoplasmic side of the membrane. A Mitochondrial localization signal motif is present at residues 51 to 54 (HHCH). 3 residues coordinate Zn(2+): C53, H106, and D110. A helical transmembrane segment spans residues 141–161 (ILGALVSVLSIWVVTGVLVYL). The Lumenal segment spans residues 162–175 (AVERLISGDYEIDG). A helical transmembrane segment spans residues 176 to 196 (GTMLITSGCAVAVNIIMGLTL). The Cytoplasmic segment spans residues 197–220 (HQSGHGHSHGTTNQQEENPSVRAA). Residues 221–241 (FIHVIGDFMQSMGVLVAAYIL) traverse the membrane as a helical segment. The Zn(2+) site is built by H223 and D227. At 242-249 (YFKPEYKY) the chain is on the lumenal side. Residues 250–270 (VDPICTFVFSILVLGTTLTIL) traverse the membrane as a helical segment. Over 271–304 (RDVILVLMEGTPKGVDFTAVRDLLLSVEGVEALH) the chain is Cytoplasmic. Residues 294 to 295 (LL) carry the Lysosomal targeting motif motif. At S296 the chain carries Phosphoserine. The Zn(2+) site is built by H304, H321, and E355. A helical transmembrane segment spans residues 305–325 (SLHIWALTVAQPVLSVHIAIA). Over 326-372 (QNTDAQAVLKTASSRLQGKFHFHTVTIQIEDYSEDMKDCQACQGPSD) the chain is Lumenal.

It belongs to the cation diffusion facilitator (CDF) transporter (TC 2.A.4) family. SLC30A subfamily. In terms of assembly, homodimer. Interacts (via lysosomal targeting motif) with AP3D1; in AP-3-mediated transport to lysosomes. Interacts with TMEM163. In terms of processing, phosphorylated at Ser-296. Phosphorylation at Ser-296 prevents localization to lysosomes. Dephosphorylation of Ser-296 which triggers localization to lysosomes, accumulation of zinc into lysosomes and lysosomal-mediated cell death is induced by TNF-alpha.

The protein resides in the cytoplasmic vesicle. The protein localises to the secretory vesicle membrane. It localises to the zymogen granule membrane. It is found in the endosome membrane. Its subcellular location is the lysosome membrane. The protein resides in the mitochondrion inner membrane. The protein localises to the cell membrane. It carries out the reaction Zn(2+)(in) + 2 H(+)(out) = Zn(2+)(out) + 2 H(+)(in). Its function is as follows. Electroneutral proton-coupled antiporter concentrating zinc ions into a variety of intracellular organelles including endosomes, zymogen granules and mitochondria. Thereby, plays a crucial role in cellular zinc homeostasis to confer upon cells protection against its potential cytotoxicity. Regulates the zinc concentration of milk, through the transport of zinc ions into secretory vesicles of mammary cells. By concentrating zinc ions into lysosomes participates to lysosomal-mediated cell death during early mammary gland involution. Functionally, electroneutral proton-coupled antiporter mediating the efflux of zinc ions through the plasma membrane. This is Proton-coupled zinc antiporter SLC30A2 from Homo sapiens (Human).